A 730-amino-acid chain; its full sequence is uncharacterized protein (730 aa).

The span at 615–625 (FDKENSFDPSD) shows a compositional bias: basic and acidic residues. 2 disordered regions span residues 615–667 (FDKE…SSFS) and 684–730 (KSGS…FGKI). 2 stretches are compositionally biased toward low complexity: residues 653–667 (SSSS…SSFS) and 684–701 (KSGS…NSSS). Positions 713 to 723 (KKKKKKKKKKS) are enriched in basic residues.

This is an uncharacterized protein from Saccharomyces cerevisiae (strain ATCC 204508 / S288c) (Baker's yeast).